The sequence spans 447 residues: Na(+)-translocating NADH-quinone reductase subunit A (447 aa).

The protein belongs to the NqrA family. In terms of assembly, composed of six subunits; NqrA, NqrB, NqrC, NqrD, NqrE and NqrF.

The catalysed reaction is a ubiquinone + n Na(+)(in) + NADH + H(+) = a ubiquinol + n Na(+)(out) + NAD(+). Functionally, NQR complex catalyzes the reduction of ubiquinone-1 to ubiquinol by two successive reactions, coupled with the transport of Na(+) ions from the cytoplasm to the periplasm. NqrA to NqrE are probably involved in the second step, the conversion of ubisemiquinone to ubiquinol. The protein is Na(+)-translocating NADH-quinone reductase subunit A of Haemophilus influenzae (strain 86-028NP).